Consider the following 1663-residue polypeptide: Cortactin-binding protein 2 (1663 aa).

5 disordered regions span residues 1–23, 203–222, 358–440, 454–479, and 498–616; these read MATD…AGAA, KKKT…RSTE, RQAS…LHPG, GNAN…PTSR, and RFTS…PKPS. The stretch at 119–276 forms a coiled coil; that stretch reads KKMQERMSAQ…EQLKRGSDSK (158 aa). Residues 386–396 show a composition bias toward low complexity; that stretch reads PSTDSTPDPTS. The segment covering 411–422 has biased composition (polar residues); it reads QTPGIAPQNSQA. R498 bears the Asymmetric dimethylarginine mark. The segment covering 583–597 has biased composition (polar residues); sequence TVASPPSSLPQGNRV. 6 ANK repeats span residues 709-739, 743-772, 776-805, 809-838, 842-871, and 912-942; these read GRPT…DINY, DGHS…QINA, NGFT…NINH, GGQT…NRSV, DGWT…PACG, and EGWT…EPER. Residues 1447–1477 are disordered; sequence KKKGESGAWRKVNTSPRRKSGRFSLPTWNKP. Position 1524 is a phosphoserine (S1524). Disordered regions lie at residues 1581–1602 and 1618–1663; these read QKEV…KSKT and SKVT…KHNK. Polar residues predominate over residues 1582 to 1599; that stretch reads KEVSPLSSHQTTECSNSK. The span at 1624–1638 shows a compositional bias: low complexity; that stretch reads SQNTKRSSSSSNTRQ. Basic and acidic residues predominate over residues 1645–1663; sequence SKEENWNLHKNEHLDKHNK.

As to quaternary structure, interacts with CTTN/cortactin SH3 domain. Interacts with STRN, STRN4/zinedin and MOB4/phocein; this interactions mediate the association with the STRIPAK core complex and may regulate dendritic spine distribution of the STRIPAK complex in hippocampal neurons. Activation of glutamate receptors weakens the interaction with STRN and STRN4.

It is found in the cytoplasm. The protein resides in the cell cortex. The protein localises to the cell projection. It localises to the dendritic spine. Regulates the dendritic spine distribution of CTTN/cortactin in hippocampal neurons, and thus controls dendritic spinogenesis and dendritic spine maintenance. Associates with the striatin-interacting phosphatase and kinase (STRIPAK) core complex to regulate dendritic spine distribution of the STRIPAK complex in hippocampal neurons. The polypeptide is Cortactin-binding protein 2 (CTTNBP2) (Papio anubis (Olive baboon)).